The following is a 239-amino-acid chain: Ribosomal RNA small subunit methyltransferase G (239 aa).

Residues Gly-77, Phe-82, 128–129 (AE), and Arg-147 contribute to the S-adenosyl-L-methionine site. The tract at residues 215–239 (IRKTKSTPKKYPRKPGTPNKSPIEG) is disordered. The span at 216-227 (RKTKSTPKKYPR) shows a compositional bias: basic residues.

This sequence belongs to the methyltransferase superfamily. RNA methyltransferase RsmG family.

The protein localises to the cytoplasm. Its function is as follows. Specifically methylates the N7 position of guanine in position 535 of 16S rRNA. The polypeptide is Ribosomal RNA small subunit methyltransferase G (Bacillus velezensis (strain DSM 23117 / BGSC 10A6 / LMG 26770 / FZB42) (Bacillus amyloliquefaciens subsp. plantarum)).